The following is a 366-amino-acid chain: DNA polymerase processivity factor (366 aa).

Basic residues predominate over residues 1–16; sequence MERGSRDHHRDHRDHR. Disordered stretches follow at residues 1–25 and 286–366; these read MERG…REPP and ESRF…RCVV. The span at 286–308 shows a compositional bias: basic and acidic residues; it reads ESRFERMGKQDDGKGDRNHKNED. 2 stretches are compositionally biased toward polar residues: residues 313–322 and 330–339; these read ASKQETQYKI and KNGTAGSSLF.

Belongs to the herpesviridae polymerase accessory protein family.

In terms of biological role, accessory subunit of the DNA polymerase that acts to increase the processivity of polymerization. This is DNA polymerase processivity factor (U27) from Homo sapiens (Human).